The primary structure comprises 114 residues: Transcription initiation factor IIA subunit 2 (114 aa).

Belongs to the TFIIA subunit 2 family. In terms of assembly, TFIIA is a heterodimer composed of the large toa1 and the small toa2 subunits.

The protein localises to the nucleus. Functionally, TFIIA is a component of the transcription machinery of RNA polymerase II and plays an important role in transcriptional activation. TFIIA in a complex with tbp mediates transcriptional activity. The protein is Transcription initiation factor IIA subunit 2 (toa2) of Fusarium vanettenii (strain ATCC MYA-4622 / CBS 123669 / FGSC 9596 / NRRL 45880 / 77-13-4) (Fusarium solani subsp. pisi).